The following is a 181-amino-acid chain: Protein CENTRORADIALIS (181 aa).

The protein belongs to the phosphatidylethanolamine-binding protein family. As to quaternary structure, may form homodimers in solution.

It localises to the cytoplasm. Its function is as follows. Expression of CEN leads to a morphological switch between shoot growth and the development of flower structures (inflorescence). May form complexes with phosphorylated ligands by interfering with kinases and their effectors. This Antirrhinum majus (Garden snapdragon) protein is Protein CENTRORADIALIS (CEN).